The following is a 73-amino-acid chain: Disintegrin lutosin (73 aa).

The Disintegrin domain maps to Glu-1–Gly-73. Intrachain disulfides connect Cys-6-Cys-21, Cys-8-Cys-16, Cys-15-Cys-38, Cys-29-Cys-35, Cys-34-Cys-59, and Cys-47-Cys-66. The Cell attachment site motif lies at Arg-51–Asp-53.

The protein belongs to the venom metalloproteinase (M12B) family. P-II subfamily. P-IIa sub-subfamily. As to quaternary structure, monomer (disintegrin). Expressed by the venom gland.

The protein resides in the secreted. Inhibits fibrinogen interaction with platelets. Acts by binding to alpha-IIb/beta-3 (ITGA2B/ITGB3) on the platelet surface and inhibits aggregation induced by ADP, thrombin, platelet-activating factor and collagen. This Crotalus lutosus (Great basin rattlesnake) protein is Disintegrin lutosin.